Reading from the N-terminus, the 164-residue chain is uncharacterized protein (164 aa).

The next 2 membrane-spanning stretches (helical) occupy residues Phe-11–Leu-31 and Cys-51–Val-71.

The protein resides in the membrane. This is an uncharacterized protein from Saccharomyces cerevisiae (strain ATCC 204508 / S288c) (Baker's yeast).